We begin with the raw amino-acid sequence, 524 residues long: Na(+)/H(+) antiporter NhaB (524 aa).

The next 9 helical transmembrane spans lie at 13 to 33 (FLGN…IINP), 98 to 118 (LLLV…LFVF), 140 to 160 (AFLS…SVSV), 239 to 259 (FFIR…LVCL), 304 to 324 (AIIG…VGLV), 325 to 345 (GLSV…HSLG), 358 to 378 (LTVF…TPII), 448 to 468 (ATPN…APLI), and 479 to 499 (ALPY…FLLV).

Belongs to the NhaB Na(+)/H(+) (TC 2.A.34) antiporter family.

The protein localises to the cell inner membrane. It catalyses the reaction 2 Na(+)(in) + 3 H(+)(out) = 2 Na(+)(out) + 3 H(+)(in). In terms of biological role, na(+)/H(+) antiporter that extrudes sodium in exchange for external protons. This Yersinia pseudotuberculosis serotype O:3 (strain YPIII) protein is Na(+)/H(+) antiporter NhaB.